Reading from the N-terminus, the 313-residue chain is 7,8-didemethyl-8-hydroxy-5-deazariboflavin synthase (313 aa).

A Radical SAM core domain is found at 4–235; the sequence is ITYSPAYTLV…AEITLQIPPN (232 aa). Residues C18, C22, and C25 each coordinate [4Fe-4S] cluster.

The protein belongs to the radical SAM superfamily. CofG family. In terms of assembly, consists of two subunits, CofG and CofH. [4Fe-4S] cluster is required as a cofactor.

It catalyses the reaction 5-amino-5-(4-hydroxybenzyl)-6-(D-ribitylimino)-5,6-dihydrouracil + S-adenosyl-L-methionine = 7,8-didemethyl-8-hydroxy-5-deazariboflavin + 5'-deoxyadenosine + L-methionine + NH4(+) + H(+). It participates in cofactor biosynthesis; coenzyme F0 biosynthesis. In terms of biological role, catalyzes the radical-mediated synthesis of 7,8-didemethyl-8-hydroxy-5-deazariboflavin from 5-amino-5-(4-hydroxybenzyl)-6-(D-ribitylimino)-5,6-dihydrouracil. In Synechocystis sp. (strain ATCC 27184 / PCC 6803 / Kazusa), this protein is 7,8-didemethyl-8-hydroxy-5-deazariboflavin synthase.